A 24-amino-acid polypeptide reads, in one-letter code: Brevinin-1E (24 aa).

C18 and C24 are joined by a disulfide.

In terms of tissue distribution, expressed by the skin glands.

It localises to the secreted. Functionally, antimicrobial peptide. Stimulates insulin release by BRIN-BD11 cells in vitro. The polypeptide is Brevinin-1E (Pelophylax saharicus (Sahara frog)).